Here is a 599-residue protein sequence, read N- to C-terminus: Purine-uracil permease NCS1 (599 aa).

12 consecutive transmembrane segments (helical) span residues 140–160 (LWIGLVVGVPTYYLAGSLVDL), 164–184 (WWQGIATVVTANLILLVPLVL), 218–238 (LVGCGWYGIETWIGGEAIFLL), 257–277 (TSPLEFSCFIVFWLAQLCIVW), 293–313 (ILISLTSCLLAWSYLKAGGFG), 327–347 (FWTLFFPSLTANISFWATLAL), 363–383 (IIGQVGLPVFMGLFTFVGVAV), 411–433 (TLLAIVGISLATLTTNIAANVVA), 445–465 (FFTFGRGAFLTAVLGIVFQPW), 474–494 (FVYTWLIGYSALLGPIGGIIL), 525–545 (YNVAAVVALVAGIIPVVPGFL), and 560–580 (VVYDNALFFSFIIAGFVYWII).

Belongs to the purine-cytosine permease (2.A.39) family. In terms of tissue distribution, expressed in roots, leaves, stems, flowers, siliques and seeds.

The protein localises to the plastid. It is found in the chloroplast envelope. It localises to the chloroplast membrane. Its function is as follows. Nucleobase-proton symporter that facilitates the uptake of nucleobases in the cells. Can transport adenine, guanine and uracil. Contributes to uracil import into plastids for plastidic uracil salvage which is essential for plant growth and development. This Arabidopsis thaliana (Mouse-ear cress) protein is Purine-uracil permease NCS1.